A 561-amino-acid chain; its full sequence is 3-hydroxy-3-methylglutaryl-coenzyme A reductase 3 (561 aa).

Transmembrane regions (helical) follow at residues P25–M45 and I69–Q89. The tract at residues S90–E145 is linker. The interval A113 to E146 is disordered. Residues P134 to M143 show a composition bias toward basic and acidic residues. The tract at residues E146–S561 is catalytic. The active-site Charge relay system is the E240. N304 carries an N-linked (GlcNAc...) asparagine glycan. Residues K372 and D448 each act as charge relay system in the active site. H546 (proton donor) is an active-site residue. N550 carries an N-linked (GlcNAc...) asparagine glycan.

Belongs to the HMG-CoA reductase family.

Its subcellular location is the endoplasmic reticulum membrane. It carries out the reaction (R)-mevalonate + 2 NADP(+) + CoA = (3S)-3-hydroxy-3-methylglutaryl-CoA + 2 NADPH + 2 H(+). Its pathway is metabolic intermediate biosynthesis; (R)-mevalonate biosynthesis; (R)-mevalonate from acetyl-CoA: step 3/3. In terms of biological role, catalyzes the synthesis of mevalonate. The specific precursor of all isoprenoid compounds present in plants. In Oryza sativa subsp. japonica (Rice), this protein is 3-hydroxy-3-methylglutaryl-coenzyme A reductase 3 (HMG3).